Here is a 378-residue protein sequence, read N- to C-terminus: F-box/kelch-repeat protein At4g29370 (378 aa).

The 47-residue stretch at 23–69 (TSLFLQLPDEILVNCLARLSKSSYRSLSLVCKTFRSLLHSQPLYSAR) folds into the F-box domain. Kelch repeat units lie at residues 124-172 (GSKI…VLDD), 173-218 (KIYV…VRKI), 220-259 (VVGG…WSNS), and 260-305 (WCVI…NDNR).

The chain is F-box/kelch-repeat protein At4g29370 from Arabidopsis thaliana (Mouse-ear cress).